The primary structure comprises 932 residues: Adhesion G protein-coupled receptor E2 (932 aa).

A signal peptide spans 1 to 15; the sequence is MWGFWLLLFWGFSGT. The Extracellular segment spans residues 16-652; the sequence is HRWGMTTLAI…TMEFSLYIIS (637 aa). 2 consecutive EGF-like domains span residues 32-69 and 81-119; these read GVNE…SNGQ and DVNE…SAGG. Cystine bridges form between C36–C48, C42–C57, C85–C98, C92–C107, C137–C149, C143–C158, C160–C171, C177–C189, C183–C198, C226–C239, and C233–C248. In terms of domain architecture, EGF-like 3; calcium-binding spans 133 to 172; the sequence is DVDECLTIGICPKNSNCSNSVGSYSCTCQSGFVSNGSTCE. Residues N148 and N167 are each glycosylated (N-linked (GlcNAc...) asparagine). Residues 173 to 210 form the EGF-like 4; calcium-binding domain; sequence DEDECVTRNACPEHATCHNTLGSYYCTCNEGLEFSGGG. Residues 222-260 form the EGF-like 5; calcium-binding domain; sequence DVDECSRNSTLCGPSFICINTLGSYSCSCPAGFSLSTFQ. N-linked (GlcNAc...) asparagine glycosylation is present at N229. Residues N269, N283, N309, N333, N344, N363, N405, N417, N474, and N499 are each glycosylated (N-linked (GlcNAc...) asparagine). Residues 272-307 form the EGF-like 6; calcium-binding domain; the sequence is DIDECDDICPSNSSCTNTLGSYFCTCHPGFASSNGQ. Cystine bridges form between C276–C286 and C280–C295. The EGF-like 7; calcium-binding domain occupies 319 to 354; the sequence is DIDECTQDPFRCGRNSSCTNVPGSYNCSCLPDFRMD. 2 cysteine pairs are disulfide-bonded: C323/C336 and C330/C345. In terms of domain architecture, GAIN-B spans 482 to 643; sequence EYLEIESKVI…AIIMASGELT (162 aa). The short motif at 507–509 is the Cell attachment site element; it reads RGD. Cystine bridges form between C596–C625 and C613–C627. The interval 596–643 is GPS; that stretch reads CVSWNTDVEDGRWTPSGCETVEASETHTVCSCNRMTNLAIIMASGELT. Residues 653 to 673 form a helical membrane-spanning segment; that stretch reads YVGTVISLVCLALAIATFLLF. The Cytoplasmic segment spans residues 674-681; it reads RAVQNHNT. A helical membrane pass occupies residues 682-702; it reads YLHLHLCVCLFLAKILFLTGI. Over 703 to 719 the chain is Extracellular; sequence DKTDNQTACAIIAGFLH. N-linked (GlcNAc...) asparagine glycosylation is present at N707. Residues 720–740 traverse the membrane as a helical segment; the sequence is YLFLACFFWMLVEAVMLFLMV. The Cytoplasmic segment spans residues 741–756; sequence RNLKVVNYFSSRNIKM. Residues 757 to 777 traverse the membrane as a helical segment; the sequence is LHLCAFGYGLPVVVVIISATV. The Extracellular portion of the chain corresponds to 778–795; it reads HPWGYGMHNRCWLNTETG. Residues 796–816 traverse the membrane as a helical segment; sequence FIWSFLGPVCMIITINSALLA. At 817–849 the chain is on the cytoplasmic side; that stretch reads WTLWVLRQKLCSVNSEVSKLKDTRLLTFKAIAQ. A helical transmembrane segment spans residues 850 to 870; the sequence is IFILGCSWVLGIFQIGPLASI. At 871–872 the chain is on the extracellular side; that stretch reads MA. The helical transmembrane segment at 873–893 threads the bilayer; it reads YLFTTINSLQGAFIFLIHCLL. The Cytoplasmic segment spans residues 894 to 932; the sequence is NRQVRDEYRKLLTRKTDLSSHSQTSGILLSSMPSTSKTG.

The protein belongs to the G-protein coupled receptor 2 family. Adhesion G-protein coupled receptor (ADGR) subfamily.

It localises to the cell membrane. In terms of biological role, orphan receptor involved in cell adhesion and probably in cell-cell interactions involved specifically cells of the immune system. May play a role in regulatory T-cells (Treg) development. The chain is Adhesion G protein-coupled receptor E2 (Adgre1) from Rattus norvegicus (Rat).